The primary structure comprises 118 residues: Ribonuclease P protein component (118 aa).

Belongs to the RnpA family. In terms of assembly, consists of a catalytic RNA component (M1 or rnpB) and a protein subunit.

It catalyses the reaction Endonucleolytic cleavage of RNA, removing 5'-extranucleotides from tRNA precursor.. Functionally, RNaseP catalyzes the removal of the 5'-leader sequence from pre-tRNA to produce the mature 5'-terminus. It can also cleave other RNA substrates such as 4.5S RNA. The protein component plays an auxiliary but essential role in vivo by binding to the 5'-leader sequence and broadening the substrate specificity of the ribozyme. In Levilactobacillus brevis (strain ATCC 367 / BCRC 12310 / CIP 105137 / JCM 1170 / LMG 11437 / NCIMB 947 / NCTC 947) (Lactobacillus brevis), this protein is Ribonuclease P protein component.